Consider the following 372-residue polypeptide: DNA replication and repair protein RecF (372 aa).

G30 to T37 is a binding site for ATP.

It belongs to the RecF family.

It localises to the cytoplasm. In terms of biological role, the RecF protein is involved in DNA metabolism; it is required for DNA replication and normal SOS inducibility. RecF binds preferentially to single-stranded, linear DNA. It also seems to bind ATP. This is DNA replication and repair protein RecF from Ruminiclostridium cellulolyticum (strain ATCC 35319 / DSM 5812 / JCM 6584 / H10) (Clostridium cellulolyticum).